The sequence spans 229 residues: Flagellar L-ring protein (229 aa).

The first 23 residues, 1–23 (MLSRLGARVLYCLAGLALLASGG), serve as a signal peptide directing secretion. Residue C24 is the site of N-palmitoyl cysteine attachment. C24 carries the S-diacylglycerol cysteine lipid modification.

It belongs to the FlgH family. As to quaternary structure, the basal body constitutes a major portion of the flagellar organelle and consists of four rings (L,P,S, and M) mounted on a central rod.

The protein resides in the cell outer membrane. The protein localises to the bacterial flagellum basal body. In terms of biological role, assembles around the rod to form the L-ring and probably protects the motor/basal body from shearing forces during rotation. The sequence is that of Flagellar L-ring protein from Cupriavidus pinatubonensis (strain JMP 134 / LMG 1197) (Cupriavidus necator (strain JMP 134)).